Here is a 314-residue protein sequence, read N- to C-terminus: Aryldialkylphosphatase (314 aa).

Positions 22, 24, and 137 each coordinate Fe cation. Positions 137, 170, and 199 each coordinate Co(2+). At K137 the chain carries N6-carboxylysine. Position 256 (D256) interacts with Fe cation.

The protein belongs to the metallo-dependent hydrolases superfamily. Phosphotriesterase family. In terms of assembly, homodimer. Co(2+) serves as cofactor. The cofactor is Fe cation.

The catalysed reaction is An aryl dialkyl phosphate + H2O = dialkyl phosphate + an aryl alcohol.. With respect to regulation, inactivated by EDTA and o-phenanthroline. In terms of biological role, has a low paraoxonase activity. Also active, but with a lower activity, against other organo-phosphorus insecticides such as Dursban, Coumaphos, pNP-butanoate or parathion. The chain is Aryldialkylphosphatase (php) from Saccharolobus solfataricus (strain ATCC 35092 / DSM 1617 / JCM 11322 / P2) (Sulfolobus solfataricus).